The chain runs to 265 residues: Ribosomal RNA small subunit methyltransferase A (265 aa).

S-adenosyl-L-methionine is bound by residues Asn13, Leu15, Gly39, Glu59, Asp87, and Asn108.

This sequence belongs to the class I-like SAM-binding methyltransferase superfamily. rRNA adenine N(6)-methyltransferase family. RsmA subfamily.

It is found in the cytoplasm. The enzyme catalyses adenosine(1518)/adenosine(1519) in 16S rRNA + 4 S-adenosyl-L-methionine = N(6)-dimethyladenosine(1518)/N(6)-dimethyladenosine(1519) in 16S rRNA + 4 S-adenosyl-L-homocysteine + 4 H(+). In terms of biological role, specifically dimethylates two adjacent adenosines (A1518 and A1519) in the loop of a conserved hairpin near the 3'-end of 16S rRNA in the 30S particle. May play a critical role in biogenesis of 30S subunits. This is Ribosomal RNA small subunit methyltransferase A from Aliarcobacter butzleri (strain RM4018) (Arcobacter butzleri).